A 448-amino-acid chain; its full sequence is JmjC domain-containing protein D (448 aa).

The JmjC domain maps to 305-448 (EQIPQLRNDI…SLSQSFSIFP (144 aa)).

This chain is JmjC domain-containing protein D (jcdD), found in Dictyostelium discoideum (Social amoeba).